A 357-amino-acid polypeptide reads, in one-letter code: UDP-N-acetylglucosamine--N-acetylmuramyl-(pentapeptide) pyrophosphoryl-undecaprenol N-acetylglucosamine transferase (357 aa).

Residues 12 to 14, Asn-124, Arg-162, Ser-190, Ile-243, 262 to 267, and Gln-288 each bind UDP-N-acetyl-alpha-D-glucosamine; these read TGG and ALTVAE.

It belongs to the glycosyltransferase 28 family. MurG subfamily.

It is found in the cell inner membrane. It catalyses the reaction di-trans,octa-cis-undecaprenyl diphospho-N-acetyl-alpha-D-muramoyl-L-alanyl-D-glutamyl-meso-2,6-diaminopimeloyl-D-alanyl-D-alanine + UDP-N-acetyl-alpha-D-glucosamine = di-trans,octa-cis-undecaprenyl diphospho-[N-acetyl-alpha-D-glucosaminyl-(1-&gt;4)]-N-acetyl-alpha-D-muramoyl-L-alanyl-D-glutamyl-meso-2,6-diaminopimeloyl-D-alanyl-D-alanine + UDP + H(+). It participates in cell wall biogenesis; peptidoglycan biosynthesis. Functionally, cell wall formation. Catalyzes the transfer of a GlcNAc subunit on undecaprenyl-pyrophosphoryl-MurNAc-pentapeptide (lipid intermediate I) to form undecaprenyl-pyrophosphoryl-MurNAc-(pentapeptide)GlcNAc (lipid intermediate II). The chain is UDP-N-acetylglucosamine--N-acetylmuramyl-(pentapeptide) pyrophosphoryl-undecaprenol N-acetylglucosamine transferase from Alcanivorax borkumensis (strain ATCC 700651 / DSM 11573 / NCIMB 13689 / SK2).